Here is a 193-residue protein sequence, read N- to C-terminus: dCTP deaminase (193 aa).

DCTP contacts are provided by residues arginine 110–arginine 115, aspartate 128, valine 136–glutamate 138, tyrosine 171, lysine 178, and glutamine 182. The active-site Proton donor/acceptor is glutamate 138. Residues lysine 173–aspartate 193 form a disordered region.

Belongs to the dCTP deaminase family. In terms of assembly, homotrimer.

The enzyme catalyses dCTP + H2O + H(+) = dUTP + NH4(+). The protein operates within pyrimidine metabolism; dUMP biosynthesis; dUMP from dCTP (dUTP route): step 1/2. Functionally, catalyzes the deamination of dCTP to dUTP. In Shewanella sp. (strain ANA-3), this protein is dCTP deaminase.